An 88-amino-acid chain; its full sequence is Small ribosomal subunit protein bS20 (88 aa).

The segment at 1–21 is disordered; it reads MANSAQAKKRARQNVKARKHN. Over residues 7–21 the composition is skewed to basic residues; the sequence is AKKRARQNVKARKHN.

The protein belongs to the bacterial ribosomal protein bS20 family.

Binds directly to 16S ribosomal RNA. In Acinetobacter baumannii (strain AB307-0294), this protein is Small ribosomal subunit protein bS20.